The sequence spans 408 residues: Succinylornithine transaminase (408 aa).

Residue lysine 252 is modified to N6-(pyridoxal phosphate)lysine.

The protein belongs to the class-III pyridoxal-phosphate-dependent aminotransferase family. AstC subfamily. The cofactor is pyridoxal 5'-phosphate.

It carries out the reaction N(2)-succinyl-L-ornithine + 2-oxoglutarate = N-succinyl-L-glutamate 5-semialdehyde + L-glutamate. It participates in amino-acid degradation; L-arginine degradation via AST pathway; L-glutamate and succinate from L-arginine: step 3/5. Functionally, catalyzes the transamination of N(2)-succinylornithine and alpha-ketoglutarate into N(2)-succinylglutamate semialdehyde and glutamate. Can also act as an acetylornithine aminotransferase. In Salmonella agona (strain SL483), this protein is Succinylornithine transaminase.